The chain runs to 224 residues: Giant hemoglobin linker AV-1 chain (224 aa).

The region spanning 62–103 (HWCPSKYHRCGNSPQCMSNMAFCDGVNDCKNHFDEDENRCVV) is the LDL-receptor class A domain. Disulfide bonds link Cys-64–Cys-77, Cys-71–Cys-90, and Cys-84–Cys-101. The N-linked (GlcNAc...) asparagine glycan is linked to Asn-108.

In terms of assembly, giant hemoglobin is composed of four heme-containing chains (AI to AIV), and two linker chains (AV and AVI).

Functionally, acts as a linker for the assembly of heme-containing chains in the construction of giant hemoglobin. The protein is Giant hemoglobin linker AV-1 chain of Lamellibrachia sp. (Deep-sea giant tube worm).